Here is a 169-residue protein sequence, read N- to C-terminus: MWSRNVRLLGSWTRSYMVPATKRKTIPVYPPVQRIASSQIMKQVALSEIESLDPGAVKRKLISKKNKDRLKAGDVVRIVYDSSKCSYDTFVGYILSIDRKQLVQDASLLLRNQIAKTAVEIRVPLFSPLIERIDLLTPHVSSRQRNKHYYIRGTRLDVGDLEAGLRRKK.

The transit peptide at 1-16 directs the protein to the mitochondrion; sequence MWSRNVRLLGSWTRSY.

The protein belongs to the bacterial ribosomal protein bL19 family. Component of the mitochondrial large ribosomal subunit (mt-LSU). Mature yeast 74S mitochondrial ribosomes consist of a small (37S) and a large (54S) subunit. The 37S small subunit contains a 15S ribosomal RNA (15S mt-rRNA) and 34 different proteins. The 54S large subunit contains a 21S rRNA (21S mt-rRNA) and 46 different proteins.

The protein localises to the mitochondrion. Component of the mitochondrial ribosome (mitoribosome), a dedicated translation machinery responsible for the synthesis of mitochondrial genome-encoded proteins, including at least some of the essential transmembrane subunits of the mitochondrial respiratory chain. The mitoribosomes are attached to the mitochondrial inner membrane and translation products are cotranslationally integrated into the membrane. bL19m is essential for respiration. In Saccharomyces cerevisiae (strain ATCC 204508 / S288c) (Baker's yeast), this protein is Large ribosomal subunit protein bL19m (IMG1).